Reading from the N-terminus, the 534-residue chain is Cytokinin dehydrogenase 1 (534 aa).

An N-terminal signal peptide occupies residues 1-18; that stretch reads MAVVYYLLLAGLIACSHA. N-linked (GlcNAc...) asparagine glycans are attached at residues N52, N63, and N89. Positions 65 to 245 constitute an FAD-binding PCMH-type domain; that stretch reads TSALPAAVLY…TRARIAVEPA (181 aa). FAD-binding residues include F100, G102, R103, and G104. At H105 the chain carries Pros-8alpha-FAD histidine. FAD is bound by residues S106 and Q110. N-linked (GlcNAc...) asparagine glycosylation is present at N134. Residues D169, T174, S180, I184, and I235 each contribute to the FAD site. Residue D169 coordinates N(6)-dimethylallyladenine. D169 lines the trans-zeatin pocket. Residues N294, N323, and N338 are each glycosylated (N-linked (GlcNAc...) asparagine). Position 381 (E381) interacts with N(6)-dimethylallyladenine. E381 serves as a coordination point for trans-zeatin. N-linked (GlcNAc...) asparagine glycosylation occurs at N434. Residue S456 participates in trans-zeatin binding. Residues Y491, S527, and Q530 each coordinate FAD.

The protein belongs to the oxygen-dependent FAD-linked oxidoreductase family. In terms of assembly, monomer. FAD serves as cofactor. Glycosylated; with approximately 10 hexose residues per site. In terms of tissue distribution, expressed in immature kernels and unpollinated cobs. Weakly expressed in kernels harvested two weeks after anthesis.

The protein localises to the secreted. Its subcellular location is the extracellular space. It catalyses the reaction N(6)-dimethylallyladenine + A + H2O = 3-methyl-2-butenal + adenine + AH2. Its activity is regulated as follows. Competitive inhibition by phenylureas. In terms of biological role, catalyzes the oxidation of cytokinins, a family of N(6)-substituted adenine derivatives that are plant hormones, where the substituent is an isopentenyl group. Cleaves trans-zeatin, N(6)-dimethylallyladenine (isopentenyladenine), isopentenyladenosine, zeatin riboside and cis-zeatin, but not dihydrozeatin, kinetin and benzylaminopurine. This chain is Cytokinin dehydrogenase 1 (CKX1), found in Zea mays (Maize).